A 114-amino-acid chain; its full sequence is rRNA-processing protein cgrA (114 aa).

The segment covering 1–11 (MSSAIPTSSVN) has biased composition (polar residues). The tract at residues 1–114 (MSSAIPTSSV…REKRNKLLHS (114 aa)) is disordered. Over residues 39 to 93 (YEKRLEARKRQEAVKEHERELREEKEAERKAQIQKIKDRRAAKEEKERYEKMAEK) the composition is skewed to basic and acidic residues. Positions 40 to 101 (EKRLEARKRQ…EKMHRKRVER (62 aa)) form a coiled coil. Residues 94-114 (MHRKRVERLKRREKRNKLLHS) are compositionally biased toward basic residues.

Belongs to the CGR1 family.

It is found in the nucleus. The protein resides in the nucleolus. Its function is as follows. Involved in nucleolar integrity and required for processing of the pre-rRNA for the 60S ribosome subunit. The protein is rRNA-processing protein cgrA (cgrA) of Aspergillus fumigatus (strain ATCC MYA-4609 / CBS 101355 / FGSC A1100 / Af293) (Neosartorya fumigata).